Here is a 588-residue protein sequence, read N- to C-terminus: Snake venom 5'-nucleotidase (588 aa).

Positions 1-40 (MQTPKRRRGAQGCPRSSPSPPLLLLVGAVWFCAALSVAAG) are cleaved as a signal peptide. 2 residues coordinate Zn(2+): D51 and H53. C66 and C71 are oxidised to a cystine. The N-linked (GlcNAc...) asparagine glycan is linked to N88. Zn(2+)-binding residues include D99 and N131. A glycan (N-linked (GlcNAc...) asparagine) is linked at N167. Residues H234 and H257 each coordinate Zn(2+). N327, N347, and N361 each carry an N-linked (GlcNAc...) asparagine glycan. Disulfide bonds link C367–C372 and C379–C401. R368 contributes to the AMP binding site. AMP-binding residues include N404 and R409. N418 carries N-linked (GlcNAc...) asparagine glycosylation. F432 contributes to the AMP binding site. The cysteines at positions 491 and 494 are disulfide-linked. 2 residues coordinate AMP: F515 and D521. N532 carries an N-linked (GlcNAc...) asparagine glycan. S564 carries the GPI-anchor amidated serine lipid modification. Positions 565–588 (AGTLFQAQLFLTWGLCISLLYFIL) are cleaved as a propeptide — removed in mature form.

This sequence belongs to the 5'-nucleotidase family. Zn(2+) is required as a cofactor. Venom 5'-nucleotidases (or a part thereof) may be released into the venom via exosome-like vesicles. They may be attached via a GPI anchor to the membrane of these vesicles. Soluble forms of 5'-nucleotidase might be released by cleavage of the ectodomain in the exosome-like vesicles or venom gland cells. Expressed by the venom gland.

The protein localises to the membrane. It catalyses the reaction a ribonucleoside 5'-phosphate + H2O = a ribonucleoside + phosphate. In terms of biological role, hydrolyzes nucleotides into nucleosides. Snake venom 5'-nucleotidases are widely distributed among venomous snake taxa, but there is a lack of information about their biological activities. They have been shown to inhibit platelet aggregation. This effect may be due to the liberation of inhibitory AMP or adenosine by its action on ADP released upon initiation of aggregation. Venom 5'-nucleotidases are also known to synergistically act in vivo with other toxins like ADPases, phospholipases, and disintegrins to exert a more pronounced anti-coagulant effect. The protein is Snake venom 5'-nucleotidase of Gloydius brevicauda (Korean slamosa snake).